A 228-amino-acid chain; its full sequence is L-ribulose-5-phosphate 4-epimerase UlaF (228 aa).

Substrate-binding positions include 26-27 (GN), 43-44 (SG), and 72-73 (SS). Zn(2+)-binding residues include D74, H93, and H95. The active-site Proton donor/acceptor is D118. H167 lines the Zn(2+) pocket. Y225 functions as the Proton donor/acceptor in the catalytic mechanism.

Belongs to the aldolase class II family. AraD/FucA subfamily. The cofactor is Zn(2+).

The enzyme catalyses L-ribulose 5-phosphate = D-xylulose 5-phosphate. The protein operates within cofactor degradation; L-ascorbate degradation; D-xylulose 5-phosphate from L-ascorbate: step 4/4. Functionally, catalyzes the isomerization of L-ribulose 5-phosphate to D-xylulose 5-phosphate. Is involved in the anaerobic L-ascorbate utilization. The sequence is that of L-ribulose-5-phosphate 4-epimerase UlaF from Escherichia coli O7:K1 (strain IAI39 / ExPEC).